The chain runs to 297 residues: uncharacterized protein (297 aa).

Positions 175-199 are disordered; sequence VLPTNRNNPVRSNVDIKPVNPPSSK. Over residues 176-185 the composition is skewed to polar residues; that stretch reads LPTNRNNPVR. An N-linked (GlcNAc...) asparagine; by host glycan is attached at Asn-269. The chain crosses the membrane as a helical span at residues 277–297; the sequence is LFGSPVLLICVASLLLLIIIL.

The protein belongs to the ascovirus HvAV ORF18 family.

The protein localises to the membrane. This is an uncharacterized protein from Noctuidae (owlet moths).